Reading from the N-terminus, the 288-residue chain is Homoserine kinase (288 aa).

ATP is bound at residue 79–89; that stretch reads PLARGLGSSSS.

Belongs to the GHMP kinase family. Homoserine kinase subfamily.

The protein resides in the cytoplasm. The catalysed reaction is L-homoserine + ATP = O-phospho-L-homoserine + ADP + H(+). It functions in the pathway amino-acid biosynthesis; L-threonine biosynthesis; L-threonine from L-aspartate: step 4/5. Functionally, catalyzes the ATP-dependent phosphorylation of L-homoserine to L-homoserine phosphate. In Streptococcus gordonii (strain Challis / ATCC 35105 / BCRC 15272 / CH1 / DL1 / V288), this protein is Homoserine kinase.